The sequence spans 404 residues: Spore germination protein YndF (404 aa).

Residues 1 to 24 form the signal peptide; that stretch reads MKSKLKRQLPAMVIVCLLMICVTG. Residue Cys25 is the site of N-palmitoyl cysteine attachment. Cys25 carries S-diacylglycerol cysteine lipidation.

Belongs to the GerABKC lipoprotein family.

The protein resides in the cell membrane. In terms of biological role, may be involved in spore germination. This Bacillus subtilis (strain 168) protein is Spore germination protein YndF (yndF).